Here is a 355-residue protein sequence, read N- to C-terminus: MRKIIHVDMDCFYAAIEMRDNPTLIGKPIAVGGEAKHRGVLATCNYEARKFGLHSAMSTAQAFKLCPNLILLPVNMPLYKQVSQQIHQIFRRYTDVIEPLSLDEAYLDVTDSTACSGSATWIATEIRQAIFNELGLTASAGIAPLKFLAKIASEQNKPNGQFVIKPEQIEHFIANLPLKKIPGVGKVTAQRLMAMGLNTCADIQHMNKARLLEQFGKLGQRIWAFSHGVDERHVEPHRILKSVGVERTLQHNIDELAQAYVILAELYALLIQRLKTHCPTLSFSMLHKVGVKLKFADFHVTTLEKRGMLITLNSFELLLTQIWQRAAGREIRLIGLHVNLPETTESKTQVQMSLW.

Positions 4–185 (IIHVDMDCFY…LPLKKIPGVG (182 aa)) constitute a UmuC domain. Mg(2+) is bound by residues aspartate 8 and aspartate 103. The active site involves glutamate 104.

It belongs to the DNA polymerase type-Y family. Monomer. The cofactor is Mg(2+).

It is found in the cytoplasm. The enzyme catalyses DNA(n) + a 2'-deoxyribonucleoside 5'-triphosphate = DNA(n+1) + diphosphate. Functionally, poorly processive, error-prone DNA polymerase involved in untargeted mutagenesis. Copies undamaged DNA at stalled replication forks, which arise in vivo from mismatched or misaligned primer ends. These misaligned primers can be extended by PolIV. Exhibits no 3'-5' exonuclease (proofreading) activity. May be involved in translesional synthesis, in conjunction with the beta clamp from PolIII. The polypeptide is DNA polymerase IV (Pasteurella multocida (strain Pm70)).